The primary structure comprises 225 residues: UPF0758 protein XC_3944 (225 aa).

The MPN domain occupies Ala-102 to Val-224. Positions 173, 175, and 186 each coordinate Zn(2+). A JAMM motif motif is present at residues His-173 to Asp-186.

Belongs to the UPF0758 family.

The protein is UPF0758 protein XC_3944 of Xanthomonas campestris pv. campestris (strain 8004).